Here is a 664-residue protein sequence, read N- to C-terminus: 1,4-alpha-glucan branching enzyme GlgB 2 (664 aa).

Residues 1–17 (MGGKEMRNCKELKHEKN) are compositionally biased toward basic and acidic residues. The tract at residues 1 to 31 (MGGKEMRNCKELKHEKNGNVTEKVGKNKGKS) is disordered. The active-site Nucleophile is the aspartate 342. Residue glutamate 395 is the Proton donor of the active site.

The protein belongs to the glycosyl hydrolase 13 family. GlgB subfamily. In terms of assembly, monomer.

It catalyses the reaction Transfers a segment of a (1-&gt;4)-alpha-D-glucan chain to a primary hydroxy group in a similar glucan chain.. The protein operates within glycan biosynthesis; glycogen biosynthesis. Its function is as follows. Catalyzes the formation of the alpha-1,6-glucosidic linkages in glycogen by scission of a 1,4-alpha-linked oligosaccharide from growing alpha-1,4-glucan chains and the subsequent attachment of the oligosaccharide to the alpha-1,6 position. The chain is 1,4-alpha-glucan branching enzyme GlgB 2 (glgB2) from Clostridium perfringens (strain 13 / Type A).